The primary structure comprises 1659 residues: Fatty acid synthase subunit alpha (1659 aa).

A disordered region spans residues 114 to 139; it reads TQAQASGGAGTIAGAGSSTAPVTAPP. The Carrier domain occupies 160–235; the sequence is AQAFEIVRTL…AALQKTFTGQ (76 aa). S195 carries the O-(pantetheine 4'-phosphoryl)serine modification. The interval 588 to 826 is ketoreductase (KR) domain; the sequence is GRSVLITGAG…LCLMFNTMCS (239 aa). Residues 1030-1575 enclose the Ketosynthase family 3 (KS3) domain; that stretch reads KQLLHEVLIQ…QKGAQTIVVH (546 aa). Residues C1217, H1458, and H1499 each act as for beta-ketoacyl synthase activity in the active site. Positions 1631 to 1659 are disordered; that stretch reads ETLLDPTPPQTNVDDRVARSIVQQESAEP.

It belongs to the thiolase-like superfamily. Fungal fatty acid synthetase subunit alpha family. As to quaternary structure, [Alpha(6)beta(6)] hexamers of two multifunctional subunits (alpha and beta). In terms of processing, 4'-phosphopantetheine is transferred from CoA to a specific serine of the acyl carrier domain by the C-terminal PPT domain. This modification is essential for activity because fatty acids are bound in thioester linkage to the sulfhydryl of the prosthetic group.

It catalyses the reaction acetyl-CoA + n malonyl-CoA + 2n NADPH + 4n H(+) = a long-chain-acyl-CoA + n CoA + n CO2 + 2n NADP(+).. The catalysed reaction is a fatty acyl-[ACP] + malonyl-[ACP] + H(+) = a 3-oxoacyl-[ACP] + holo-[ACP] + CO2. It carries out the reaction a (3R)-hydroxyacyl-[ACP] + NADP(+) = a 3-oxoacyl-[ACP] + NADPH + H(+). It participates in secondary metabolite biosynthesis. In terms of biological role, fatty acid synthase subunit alpha; part of the gene cluster that mediates the biosynthesis of aspercryptins, linear lipopeptides built from six amino acids including 2 highly unusual and nonproteogenic amino acids, 2-amino-octanoic acid (2aoa) and 2-amino-dodecanol (2adol). The core structure of aspercryptins is as follows: Ser/Ala-Thr-Ile/Val-2aoa-Asn-2adol. The first step of aspercryptin biosynthesis is the generation of the fatty acid precursors, octanoic and dodecanoic acids, by the FAS subunits atnF and atnM. The fatty acid precursors are likely transformed into the corresponding alpha-amino fatty acids in three steps. First, they are hydroxylated by the cytochrome P450 monooxygenase atnE, then oxidized to the corresponding alpha-keto acids by the NAD(P)-dependent oxidoreductase atnD, and finally converted to the alpha-amino fatty acids by the PLP-dependent aminotransferases atnH or atnJ. the alpha-amino fatty acids, 2-amino-octanoic and 2-amino-dodecanoic acids, are recognized, activated, and covalently tethered to the NRPS atnA by its fourth and sixth adenylation domains. The second module of atnA is the Thr module and contains an epimerase (E) domain responsible for the epimerization of Thr to D-allo-Thr. Additionally, despite atnA having only one epimerase domain, the first amino acid of aspercryptin A1 is D-Ser, suggesting that serine is either loaded directly as D-Ser on the first module or that the epimerase domain in the threonine module epimerizes both L-Ser and L-Thr. After condensation of the hexapeptide of aspercryptin, the C-terminal reductase (TE) domain might be involved in the reductive release and production of the aldehyde hexapeptide. Further reduction would generate aspercryptins. The variety of aspercryptins produced reflects the flexibility of the atnA NRPS, allowing incorporation of alanine instead of serine, valine for isoleucine, and a C10 fatty amino alcohol instead of the C12 version. AtnB seems to be involved in the selectivity for Ile versus Val by the third module. Moreover, type B, C and D aspercryptins have an additional N-terminal cichorine, acetyl and propionyl group respectively. The protein is Fatty acid synthase subunit alpha of Emericella nidulans (strain FGSC A4 / ATCC 38163 / CBS 112.46 / NRRL 194 / M139) (Aspergillus nidulans).